A 468-amino-acid chain; its full sequence is Chromosomal replication initiator protein DnaA (468 aa).

The interval 1–84 is domain I, interacts with DnaA modulators; sequence MSSSLWLQCL…RFEVGSKPIS (84 aa). Residues 84 to 131 are domain II; the sequence is SAPPRPQRTAADVAAATSAPAQMQARQSLHKPWESRGPEPVDDLNHRS. Residues 112–132 form a disordered region; sequence LHKPWESRGPEPVDDLNHRSN. Positions 114–129 are enriched in basic and acidic residues; sequence KPWESRGPEPVDDLNH. A domain III, AAA+ region region spans residues 132–348; that stretch reads NVNPKHKFTN…GALNRVVANA (217 aa). 4 residues coordinate ATP: Gly-176, Gly-178, Lys-179, and Thr-180. Residues 349 to 468 form a domain IV, binds dsDNA region; that stretch reads NFTGRAITID…YSNLIRTLSS (120 aa).

This sequence belongs to the DnaA family. As to quaternary structure, oligomerizes as a right-handed, spiral filament on DNA at oriC.

Its subcellular location is the cytoplasm. Its function is as follows. Plays an essential role in the initiation and regulation of chromosomal replication. ATP-DnaA binds to the origin of replication (oriC) to initiate formation of the DNA replication initiation complex once per cell cycle. Binds the DnaA box (a 9 base pair repeat at the origin) and separates the double-stranded (ds)DNA. Forms a right-handed helical filament on oriC DNA; dsDNA binds to the exterior of the filament while single-stranded (ss)DNA is stabiized in the filament's interior. The ATP-DnaA-oriC complex binds and stabilizes one strand of the AT-rich DNA unwinding element (DUE), permitting loading of DNA polymerase. After initiation quickly degrades to an ADP-DnaA complex that is not apt for DNA replication. Binds acidic phospholipids. The polypeptide is Chromosomal replication initiator protein DnaA (Aliivibrio salmonicida (strain LFI1238) (Vibrio salmonicida (strain LFI1238))).